We begin with the raw amino-acid sequence, 98 residues long: MEARDIILRPVVTEASMAGMDNKRYTFDVDLRATKTQVKNAVEEIFGVKVVKVNIMNVKGKLKRQGRYEGYTKRRRKAIVTLSADSNEIKLFNDNNEN.

This sequence belongs to the universal ribosomal protein uL23 family. Part of the 50S ribosomal subunit. Contacts protein L29, and trigger factor when it is bound to the ribosome.

In terms of biological role, one of the early assembly proteins it binds 23S rRNA. One of the proteins that surrounds the polypeptide exit tunnel on the outside of the ribosome. Forms the main docking site for trigger factor binding to the ribosome. The polypeptide is Large ribosomal subunit protein uL23 (Limosilactobacillus reuteri (strain DSM 20016) (Lactobacillus reuteri)).